Consider the following 41-residue polypeptide: Large ribosomal subunit protein bL36 (41 aa).

The protein belongs to the bacterial ribosomal protein bL36 family.

The polypeptide is Large ribosomal subunit protein bL36 (Vibrio vulnificus (strain YJ016)).